The following is a 427-amino-acid chain: Chitin disaccharide deacetylase (427 aa).

Positions 1 to 22 (MKLNKLAIATLVSAALSQYAFA) are cleaved as a signal peptide. One can recognise a NodB homology domain in the interval 28–326 (GTIYLTFDDG…LAKQAGYVFD (299 aa)). Chitin-binding type-3 domains are found at residues 333–375 (PNWQ…SSLW) and 382–419 (TNWT…TPNS).

Belongs to the polysaccharide deacetylase family. Carbohydrate-binding module 12 subfamily.

It catalyses the reaction N,N'-diacetylchitobiose + H2O = N-acetyl-beta-D-glucosaminyl-(1-&gt;4)-D-glucosamine + acetate. The protein operates within glycan degradation; chitin degradation. Specifically catalyzes the degradation of N,N'-diacetylchitobiose. Key enzyme in the chitin catabolic cascade. The protein is Chitin disaccharide deacetylase (deaA) of Vibrio alginolyticus.